The primary structure comprises 382 residues: Heme A synthase (382 aa).

Transmembrane regions (helical) follow at residues 25 to 45, 112 to 132, 138 to 158, 176 to 196, 211 to 231, 270 to 290, 303 to 323, and 327 to 347; these read GAVR…VAVG, LLGR…WARG, LLLG…IGWI, LALH…LAAG, VVAG…GLVA, LALV…VAIA, AAAG…GLGI, and LLHV…AVLI. Residue H277 participates in heme binding. H338 contacts heme.

Belongs to the COX15/CtaA family. Type 2 subfamily. In terms of assembly, interacts with CtaB. Requires heme b as cofactor.

The protein localises to the cell membrane. The catalysed reaction is Fe(II)-heme o + 2 A + H2O = Fe(II)-heme a + 2 AH2. It functions in the pathway porphyrin-containing compound metabolism; heme A biosynthesis; heme A from heme O: step 1/1. Its function is as follows. Catalyzes the conversion of heme O to heme A by two successive hydroxylations of the methyl group at C8. The first hydroxylation forms heme I, the second hydroxylation results in an unstable dihydroxymethyl group, which spontaneously dehydrates, resulting in the formyl group of heme A. The sequence is that of Heme A synthase from Methylorubrum extorquens (strain PA1) (Methylobacterium extorquens).